Here is a 100-residue protein sequence, read N- to C-terminus: uncharacterized protein (100 aa).

It belongs to the ycf15 family.

It localises to the plastid. The protein resides in the chloroplast. This is an uncharacterized protein from Panax ginseng (Korean ginseng).